The chain runs to 447 residues: Glutamyl-tRNA reductase (447 aa).

Residues 56-59 (TCNR), S119, 124-126 (ETQ), and Q130 contribute to the substrate site. The active-site Nucleophile is the C57. An NADP(+)-binding site is contributed by 201–206 (GLGEMS).

This sequence belongs to the glutamyl-tRNA reductase family. As to quaternary structure, homodimer.

It catalyses the reaction (S)-4-amino-5-oxopentanoate + tRNA(Glu) + NADP(+) = L-glutamyl-tRNA(Glu) + NADPH + H(+). It functions in the pathway porphyrin-containing compound metabolism; protoporphyrin-IX biosynthesis; 5-aminolevulinate from L-glutamyl-tRNA(Glu): step 1/2. Catalyzes the NADPH-dependent reduction of glutamyl-tRNA(Glu) to glutamate 1-semialdehyde (GSA). The polypeptide is Glutamyl-tRNA reductase (Helicobacter acinonychis (strain Sheeba)).